We begin with the raw amino-acid sequence, 71 residues long: Large ribosomal subunit protein bL31 (71 aa).

4 residues coordinate Zn(2+): Cys-16, Cys-18, Cys-37, and Cys-40.

Belongs to the bacterial ribosomal protein bL31 family. Type A subfamily. As to quaternary structure, part of the 50S ribosomal subunit. Zn(2+) serves as cofactor.

Binds the 23S rRNA. This is Large ribosomal subunit protein bL31 from Sodalis glossinidius (strain morsitans).